Reading from the N-terminus, the 969-residue chain is Leucine--tRNA ligase (969 aa).

The 'HIGH' region signature appears at 78–89 (PYPSGEGLHVGH). A 'KMSKS' region motif is present at residues 739 to 743 (KIGKS). ATP is bound at residue lysine 742.

It belongs to the class-I aminoacyl-tRNA synthetase family.

It localises to the cytoplasm. The enzyme catalyses tRNA(Leu) + L-leucine + ATP = L-leucyl-tRNA(Leu) + AMP + diphosphate. This chain is Leucine--tRNA ligase, found in Mycobacterium tuberculosis (strain ATCC 25177 / H37Ra).